Reading from the N-terminus, the 1040-residue chain is Chromatin modification-related protein rik1 (1040 aa).

This sequence belongs to the DDB1 family. In terms of assembly, component of the Clr4 methyltransferase complex (ClrC) composed of at least clr4, rik1, pcu4, rbx1, raf1 and raf2. The cullin pcu4, rik1, raf1, raf2 and the ring-box protein rbx1 are components of an E3 ubiquitin ligase, whose activity is essential for heterochromatin assembly.

The protein localises to the nucleus. It is found in the cytoplasm. Its subcellular location is the cytoskeleton. It localises to the microtubule organizing center. The protein resides in the spindle pole body. The protein localises to the chromosome. Component of the Clr4 methyltransferase complex (ClrC) which contributes to the establishment of heterochromatin by specifically methylating histone H3 to form H3K9me. ClrC preferentially ubiquitylates H3K14 and ClrC-mediated H3 ubiquitination promotes clr4 methyltransferase activity for the methylation of H3K9. H3K9me represents a specific tag for epigenetic transcriptional repression by recruiting swi6/HP1 to methylated histones which leads to transcriptional silencing within centromeric heterochromatin, telomeric regions and at the silent mating-type loci. Rik1 is involved in the RNAi-mediated targeting of ClrC to heterochromatic repeat elements. Rik1 also has a function in meiotic telomere clustering. The polypeptide is Chromatin modification-related protein rik1 (rik1) (Schizosaccharomyces pombe (strain 972 / ATCC 24843) (Fission yeast)).